The primary structure comprises 156 residues: Ribosomal RNA large subunit methyltransferase H (156 aa).

S-adenosyl-L-methionine is bound by residues leucine 73, glycine 104, and 123–128 (LSPLTL).

Belongs to the RNA methyltransferase RlmH family. As to quaternary structure, homodimer.

It is found in the cytoplasm. The enzyme catalyses pseudouridine(1915) in 23S rRNA + S-adenosyl-L-methionine = N(3)-methylpseudouridine(1915) in 23S rRNA + S-adenosyl-L-homocysteine + H(+). In terms of biological role, specifically methylates the pseudouridine at position 1915 (m3Psi1915) in 23S rRNA. The polypeptide is Ribosomal RNA large subunit methyltransferase H (Aliivibrio fischeri (strain ATCC 700601 / ES114) (Vibrio fischeri)).